Reading from the N-terminus, the 722-residue chain is MAR-binding filament-like protein 1-1 (722 aa).

Residues 1 to 20 (MGSSCFPQSPLSHSLFSSSS) are disordered. The transit peptide at 1–50 (MGSSCFPQSPLSHSLFSSSSLSSSQFTPLLFSPRNAQKCKKKMPAMACIH) directs the protein to the chloroplast. A thylakoid-targeting transit peptide spans 51-84 (SENQKESEFCSRRTILFVGFSVLPLLSLRANAFE). Residues 85-112 (GLSVDSQVKAQPQKEETEQTIQGNAENP) are Lumenal, thylakoid-facing. Residues 113-133 (FFSLLNGLGVFGSGVLGSLYA) traverse the membrane as a helical segment. Over 134 to 722 (LARNEKAVSD…TQPASQQESS (589 aa)) the chain is Stromal. A coiled-coil region spans residues 146-679 (IESMKNKLKE…KGEILRLRTQ (534 aa)). Positions 687-722 (VNNEEKVEAGEKAAVTVKRTRRRKTATQPASQQESS) are disordered. Positions 705–712 (RTRRRKTA) match the Nuclear localization signal motif.

In terms of assembly, interacts with PTST2; the interaction is essential for the initiation of starch granules biosynthesis in leaf chloroplasts, for the correct location of the process in the stromal spaces between the thylakoid membranes, and for the association of PTST2 with the thylakoid membranes. Post-translationally, predicted to be translocated into the thylakoid by the Tat system.

The protein resides in the plastid. Its subcellular location is the chloroplast. It is found in the chloroplast thylakoid membrane. The protein localises to the chloroplast stroma. It localises to the chloroplast nucleoid. The protein resides in the nucleus. Its subcellular location is the nucleus matrix. Its function is as follows. Required for the initiation of starch granules biosynthesis in leaf chloroplasts. Anchored to the thylakoid membranes with its C-terminus facing into the stroma where it is essential for localizing PTST2 and SS4 to the stromal spaces between the thylakoid membranes in order to begin starch granule formation. Associated with leaf chloroplastic nucleoids in vivo. Binds to various chloroplastic double-stranded DNA fragments without particular sequence specificity in vitro. May function at the interface between nucleoids and thylakoids possibly by anchoring nucleoids to the thylakoid membrane system in mature chloroplasts. Likely to participate in nuclear architecture by connecting chromatin with the nuclear matrix and potentially with the nuclear envelope. The protein is MAR-binding filament-like protein 1-1 of Nicotiana tabacum (Common tobacco).